Reading from the N-terminus, the 153-residue chain is Large ribosomal subunit protein bL9 (153 aa).

This sequence belongs to the bacterial ribosomal protein bL9 family.

Its function is as follows. Binds to the 23S rRNA. The protein is Large ribosomal subunit protein bL9 of Blochmanniella pennsylvanica (strain BPEN).